A 193-amino-acid polypeptide reads, in one-letter code: FMN-dependent NADH:quinone oxidoreductase 1 (193 aa).

Residues Ser-9, 15–17, and 85–88 each bind FMN; these read SIS and MYNF.

This sequence belongs to the azoreductase type 1 family. Homodimer. It depends on FMN as a cofactor.

The catalysed reaction is 2 a quinone + NADH + H(+) = 2 a 1,4-benzosemiquinone + NAD(+). It catalyses the reaction N,N-dimethyl-1,4-phenylenediamine + anthranilate + 2 NAD(+) = 2-(4-dimethylaminophenyl)diazenylbenzoate + 2 NADH + 2 H(+). Its function is as follows. Quinone reductase that provides resistance to thiol-specific stress caused by electrophilic quinones. Also exhibits azoreductase activity. Catalyzes the reductive cleavage of the azo bond in aromatic azo compounds to the corresponding amines. In Xanthomonas axonopodis pv. citri (strain 306), this protein is FMN-dependent NADH:quinone oxidoreductase 1.